The following is a 183-amino-acid chain: Type II secretion system protein H (183 aa).

Positions 1 to 8 (MRRHRQSG) are cleaved as a propeptide — leader sequence. At F9 the chain carries N-methylphenylalanine. A helical membrane pass occupies residues 9 to 28 (FTLLEVLLVAMLMGLVATAV).

It belongs to the GSP H family. Type II secretion is composed of four main components: the outer membrane complex, the inner membrane complex, the cytoplasmic secretion ATPase and the periplasm-spanning pseudopilus. Interacts with core component ExeG. In terms of processing, cleaved by prepilin peptidase. Post-translationally, methylated by prepilin peptidase at the amino group of the N-terminal phenylalanine once the leader sequence is cleaved by prepilin peptidase.

The protein localises to the cell inner membrane. Functionally, component of the type II secretion system required for the energy-dependent secretion of extracellular factors such as proteases and toxins from the periplasm. Part of the pseudopilus tip complex that is critical for the recognition and binding of secretion substrates. The polypeptide is Type II secretion system protein H (exeH) (Aeromonas hydrophila).